Here is a 437-residue protein sequence, read N- to C-terminus: Trigger factor (437 aa).

The 86-residue stretch at 163–248 (GDIAVINFEG…LNQIKAKVLP (86 aa)) folds into the PPIase FKBP-type domain.

Belongs to the FKBP-type PPIase family. Tig subfamily.

It is found in the cytoplasm. The enzyme catalyses [protein]-peptidylproline (omega=180) = [protein]-peptidylproline (omega=0). Its function is as follows. Involved in protein export. Acts as a chaperone by maintaining the newly synthesized protein in an open conformation. Functions as a peptidyl-prolyl cis-trans isomerase. The sequence is that of Trigger factor from Bdellovibrio bacteriovorus (strain ATCC 15356 / DSM 50701 / NCIMB 9529 / HD100).